A 305-amino-acid chain; its full sequence is Phosphatidate cytidylyltransferase (305 aa).

Transmembrane regions (helical) follow at residues F27 to L47, F67 to C87, F96 to V116, L124 to I144, I150 to L170, T202 to S222, I232 to G252, and M277 to I297.

It belongs to the CDS family.

The protein resides in the cell membrane. It carries out the reaction a 1,2-diacyl-sn-glycero-3-phosphate + CTP + H(+) = a CDP-1,2-diacyl-sn-glycerol + diphosphate. Its pathway is phospholipid metabolism; CDP-diacylglycerol biosynthesis; CDP-diacylglycerol from sn-glycerol 3-phosphate: step 3/3. The polypeptide is Phosphatidate cytidylyltransferase (cdsA) (Chlamydia trachomatis serovar D (strain ATCC VR-885 / DSM 19411 / UW-3/Cx)).